Here is a 190-residue protein sequence, read N- to C-terminus: MKVGVLALQGAVAEHIRLIEAVGGEGVVVKRAEQLAELDGLIIPGGESTTIGKLMRRYGFIEAIRDFSNQGKAVFGTCAGLIVIADKIAGQEEAHLGLMDMTVQRNAFGRQRESFETDLPVKGIDRPVRAVFIRAPLIDQVGNGVDVLSEYNGQIVAARQGHLLAASFHPELTDDSSMHAYFLDMIREAR.

46-48 (GES) contributes to the L-glutamine binding site. The active-site Nucleophile is Cys-78. Residues Arg-105 and 133–134 (IR) contribute to the L-glutamine site. Residues His-169 and Glu-171 each act as charge relay system in the active site.

Belongs to the glutaminase PdxT/SNO family. In the presence of PdxS, forms a dodecamer of heterodimers. Only shows activity in the heterodimer.

It carries out the reaction aldehydo-D-ribose 5-phosphate + D-glyceraldehyde 3-phosphate + L-glutamine = pyridoxal 5'-phosphate + L-glutamate + phosphate + 3 H2O + H(+). It catalyses the reaction L-glutamine + H2O = L-glutamate + NH4(+). Its pathway is cofactor biosynthesis; pyridoxal 5'-phosphate biosynthesis. Functionally, catalyzes the hydrolysis of glutamine to glutamate and ammonia as part of the biosynthesis of pyridoxal 5'-phosphate. The resulting ammonia molecule is channeled to the active site of PdxS. The sequence is that of Pyridoxal 5'-phosphate synthase subunit PdxT from Niallia circulans (Bacillus circulans).